Reading from the N-terminus, the 433-residue chain is Mitochondrial inner membrane magnesium transporter MIT1 (433 aa).

Residues 257 to 298 (TNKLLRDMMKIKNNLQKLSNLLNALRTNIEKILNNENDMKNM) are a coiled coil. A helical membrane pass occupies residues 360-380 (FILLNAKISFSTLLFSISSVV). At 381-396 (TSLFGMNLKNFVEDSN) the chain is on the extracellular side. The helical transmembrane segment at 397–417 (YAFIIVSIFVSVWSIIGIYVT) threads the bilayer. Topologically, residues 418–433 (KNINTLLKFFDRYNFR) are mitochondrial matrix.

Belongs to the CorA metal ion transporter (MIT) (TC 1.A.35) family.

Its subcellular location is the mitochondrion inner membrane. Mitochondrial inner membrane magnesium transporter required for mitochondrial magnesium homeostasis. Involved in the development of the sporozoite in the mosquito vector midgut. The polypeptide is Mitochondrial inner membrane magnesium transporter MIT1 (Plasmodium berghei (strain Anka)).